Here is an 88-residue protein sequence, read N- to C-terminus: Small integral membrane protein 13 (88 aa).

The helical transmembrane segment at 10 to 30 (LVFVATLLIVLLLMVCGWYFV) threads the bilayer. The span at 48–61 (TGSQEGDNEQPSGS) shows a compositional bias: polar residues. The segment at 48-88 (TGSQEGDNEQPSGSETEEDPSASPQKIRSARQRRPPVDAGH) is disordered. Residues S59 and S61 each carry the phosphoserine modification. A Phosphothreonine modification is found at T63. Phosphoserine is present on S70.

Belongs to the SMIM13 family.

The protein resides in the membrane. In Mus musculus (Mouse), this protein is Small integral membrane protein 13 (Smim13).